Here is a 407-residue protein sequence, read N- to C-terminus: MKYDNLLDRFIKYVKVNTRSVPDSETTPSTESQEAFALTILKPEMEAIGLQDVHYNPVNGYLIGTLPANNPTLTRKIGFIAHMDTADFNAENVNPQIIDNYQGGDITLGSSNYKLDPKAFPNLNNYIGQTLITTDGTTLLGADDKSGIAEIMTAIEFLTSQPQIEHCDIKVAFGPDEEIGVGADKFEVADFEVDFAYTMDGGPLGELQYETFSAAALEVTFLGRNVHPGTAKDQMINALELAIDFHEKLPAKDRPEYTDGYQGFYHLTGLTGTVEEARASYIIRDFEEASFEARKVKVENIAQSMNAQLGTKRVLVELNDQYYNMKKVIEKDMTAIELAKEVMEELAIKPVIEPIRGGTDGSKISFMGIPTPNIFAGGENMHGRFEFVSLQTMERAVDVIIGLVCKA.

H82 serves as a coordination point for Zn(2+). D84 is a catalytic residue. D143 lines the Zn(2+) pocket. E177 (proton acceptor) is an active-site residue. Positions 178, 200, and 382 each coordinate Zn(2+).

It belongs to the peptidase M20B family. Zn(2+) is required as a cofactor.

It localises to the cytoplasm. The catalysed reaction is Release of the N-terminal residue from a tripeptide.. Cleaves the N-terminal amino acid of tripeptides. In Streptococcus pyogenes serotype M1, this protein is Peptidase T.